A 389-amino-acid polypeptide reads, in one-letter code: Dual-specificity RNA methyltransferase RlmN (389 aa).

Glutamate 110 serves as the catalytic Proton acceptor. In terms of domain architecture, Radical SAM core spans 116–355; it reads EKDRATLCVS…TIVRKTRGDD (240 aa). The cysteines at positions 123 and 360 are disulfide-linked. [4Fe-4S] cluster is bound by residues cysteine 130, cysteine 134, and cysteine 137. Residues 184-185, serine 216, 238-240, and asparagine 317 contribute to the S-adenosyl-L-methionine site; these read GE and SLH. Cysteine 360 acts as the S-methylcysteine intermediate in catalysis.

This sequence belongs to the radical SAM superfamily. RlmN family. Requires [4Fe-4S] cluster as cofactor.

Its subcellular location is the cytoplasm. It catalyses the reaction adenosine(2503) in 23S rRNA + 2 reduced [2Fe-2S]-[ferredoxin] + 2 S-adenosyl-L-methionine = 2-methyladenosine(2503) in 23S rRNA + 5'-deoxyadenosine + L-methionine + 2 oxidized [2Fe-2S]-[ferredoxin] + S-adenosyl-L-homocysteine. It carries out the reaction adenosine(37) in tRNA + 2 reduced [2Fe-2S]-[ferredoxin] + 2 S-adenosyl-L-methionine = 2-methyladenosine(37) in tRNA + 5'-deoxyadenosine + L-methionine + 2 oxidized [2Fe-2S]-[ferredoxin] + S-adenosyl-L-homocysteine. Its function is as follows. Specifically methylates position 2 of adenine 2503 in 23S rRNA and position 2 of adenine 37 in tRNAs. m2A2503 modification seems to play a crucial role in the proofreading step occurring at the peptidyl transferase center and thus would serve to optimize ribosomal fidelity. This chain is Dual-specificity RNA methyltransferase RlmN, found in Erwinia tasmaniensis (strain DSM 17950 / CFBP 7177 / CIP 109463 / NCPPB 4357 / Et1/99).